Here is a 418-residue protein sequence, read N- to C-terminus: tRNA-2-methylthio-N(6)-dimethylallyladenosine synthase (418 aa).

The MTTase N-terminal domain occupies 2–118; sequence PGYYLWTIGC…WREIPEGFIL (117 aa). Residues C11, C47, C81, C134, C138, and C141 each coordinate [4Fe-4S] cluster. Positions 120–351 constitute a Radical SAM core domain; that stretch reads LRPPVSANVT…EDLQKETVGK (232 aa). Residues 346–414 form the TRAM domain; the sequence is KETVGKANAA…PWSLQAKLVN (69 aa).

The protein belongs to the methylthiotransferase family. MiaB subfamily. In terms of assembly, monomer. It depends on [4Fe-4S] cluster as a cofactor.

The protein resides in the cytoplasm. It catalyses the reaction N(6)-dimethylallyladenosine(37) in tRNA + (sulfur carrier)-SH + AH2 + 2 S-adenosyl-L-methionine = 2-methylsulfanyl-N(6)-dimethylallyladenosine(37) in tRNA + (sulfur carrier)-H + 5'-deoxyadenosine + L-methionine + A + S-adenosyl-L-homocysteine + 2 H(+). Functionally, catalyzes the methylthiolation of N6-(dimethylallyl)adenosine (i(6)A), leading to the formation of 2-methylthio-N6-(dimethylallyl)adenosine (ms(2)i(6)A) at position 37 in tRNAs that read codons beginning with uridine. This is tRNA-2-methylthio-N(6)-dimethylallyladenosine synthase from Dehalococcoides mccartyi (strain CBDB1).